A 350-amino-acid chain; its full sequence is 3-isopropylmalate dehydrogenase (350 aa).

71–84 (GPKWADAPRHLRPE) contributes to the NAD(+) binding site. Positions 91, 101, 129, and 220 each coordinate substrate. Positions 220, 244, and 248 each coordinate Mg(2+). Position 279-291 (279-291 (GSAPDIAGKGLAN)) interacts with NAD(+).

The protein belongs to the isocitrate and isopropylmalate dehydrogenases family. LeuB type 1 subfamily. As to quaternary structure, homodimer. It depends on Mg(2+) as a cofactor. Mn(2+) serves as cofactor.

The protein localises to the cytoplasm. The catalysed reaction is (2R,3S)-3-isopropylmalate + NAD(+) = 4-methyl-2-oxopentanoate + CO2 + NADH. It participates in amino-acid biosynthesis; L-leucine biosynthesis; L-leucine from 3-methyl-2-oxobutanoate: step 3/4. Catalyzes the oxidation of 3-carboxy-2-hydroxy-4-methylpentanoate (3-isopropylmalate) to 3-carboxy-4-methyl-2-oxopentanoate. The product decarboxylates to 4-methyl-2 oxopentanoate. This chain is 3-isopropylmalate dehydrogenase, found in Caulobacter vibrioides (strain ATCC 19089 / CIP 103742 / CB 15) (Caulobacter crescentus).